A 469-amino-acid chain; its full sequence is Adenosylhomocysteinase (469 aa).

Residues T63, D139, and E164 each contribute to the substrate site. Residue 165–167 coordinates NAD(+); sequence TTT. 2 residues coordinate substrate: K194 and D198. NAD(+) is bound by residues N199, 228–233, E251, N300, 321–323, and N375; these read GYGDVG and IGH.

This sequence belongs to the adenosylhomocysteinase family. NAD(+) is required as a cofactor.

It is found in the cytoplasm. The catalysed reaction is S-adenosyl-L-homocysteine + H2O = L-homocysteine + adenosine. It functions in the pathway amino-acid biosynthesis; L-homocysteine biosynthesis; L-homocysteine from S-adenosyl-L-homocysteine: step 1/1. May play a key role in the regulation of the intracellular concentration of adenosylhomocysteine. The polypeptide is Adenosylhomocysteinase (Ectopseudomonas mendocina (strain ymp) (Pseudomonas mendocina)).